The following is a 160-amino-acid chain: Glutathione peroxidase homolog BsaA (160 aa).

The active site involves Cys-35.

It belongs to the glutathione peroxidase family.

The polypeptide is Glutathione peroxidase homolog BsaA (bsaA) (Bacillus subtilis (strain 168)).